The primary structure comprises 639 residues: Protein phosphatase 2C 35 (639 aa).

The PPM-type phosphatase domain occupies 227 to 630; that stretch reads GGDPCGLQWA…DDVSVIVISL (404 aa). Residues aspartate 262 and glycine 263 each contribute to the Mn(2+) site. Residues 295–341 are disordered; it reads QNVQHDQRPDQPGSAPSTTASDNQDQWGRRRRTRRSRPPRGADDDQR. The segment covering 308 to 320 has biased composition (polar residues); that stretch reads SAPSTTASDNQDQ. Residues 323 to 332 show a composition bias toward basic residues; sequence RRRRTRRSRP. 2 residues coordinate Mn(2+): aspartate 558 and aspartate 621.

This sequence belongs to the PP2C family. Interacts with XA21 (via juxtamembrane and kinase domains). It depends on Mg(2+) as a cofactor. The cofactor is Mn(2+).

The protein localises to the cell membrane. It carries out the reaction O-phospho-L-seryl-[protein] + H2O = L-seryl-[protein] + phosphate. The enzyme catalyses O-phospho-L-threonyl-[protein] + H2O = L-threonyl-[protein] + phosphate. Functionally, protein phosphatase that acts on XA21 pathogen recognition receptor. Negatively regulates cell death and XA21-mediated innate immunity. In Oryza sativa subsp. japonica (Rice), this protein is Protein phosphatase 2C 35 (XB15).